The primary structure comprises 347 residues: 4-hydroxy-2-oxovalerate aldolase 2 (347 aa).

The Pyruvate carboxyltransferase domain maps to 7–259 (VRITDTSLRD…KTGIDFFDIA (253 aa)). Residue 15-16 (RD) coordinates substrate. Residue D16 coordinates Mn(2+). The active-site Proton acceptor is the H19. Substrate-binding residues include S169 and H198. Mn(2+) contacts are provided by H198 and H200. Y289 serves as a coordination point for substrate.

It belongs to the 4-hydroxy-2-oxovalerate aldolase family.

It catalyses the reaction (S)-4-hydroxy-2-oxopentanoate = acetaldehyde + pyruvate. This chain is 4-hydroxy-2-oxovalerate aldolase 2, found in Mycobacterium ulcerans (strain Agy99).